The following is a 44-amino-acid chain: Photosystem II reaction center protein J (44 aa).

Residues 12 to 32 (IPLWIVGFVVGSLALGLLGIL) form a helical membrane-spanning segment.

Belongs to the PsbJ family. In terms of assembly, PSII is composed of 1 copy each of membrane proteins PsbA, PsbB, PsbC, PsbD, PsbE, PsbF, PsbH, PsbI, PsbJ, PsbK, PsbL, PsbM, PsbT, PsbY, PsbZ, Psb30/Ycf12, at least 3 peripheral proteins of the oxygen-evolving complex and a large number of cofactors. It forms dimeric complexes.

The protein resides in the plastid. Its subcellular location is the chloroplast thylakoid membrane. Functionally, one of the components of the core complex of photosystem II (PSII). PSII is a light-driven water:plastoquinone oxidoreductase that uses light energy to abstract electrons from H(2)O, generating O(2) and a proton gradient subsequently used for ATP formation. It consists of a core antenna complex that captures photons, and an electron transfer chain that converts photonic excitation into a charge separation. The protein is Photosystem II reaction center protein J of Bigelowiella natans (Pedinomonas minutissima).